The following is a 367-amino-acid chain: MEKPIFVTQPNLPPLEEFIPYLEIIWQNKQFTNNGPMHQKLEKKLCEFLGVEYISLFNNGTIALITAVQALGVKGEVITTPYSFVATAHSLVLNGLKPVFVDIDPKTLNIDPRRIEEAITPETQAIMPVHCYGNPCDTQAIADIAQKYNLKVIYDAAHAFGVEDDDGSVLRHGDLSVLSFHATKVFSTFEGGAIVCNSKEMKEKIDRLKNFGYIDETNINIIGSNGKMSEVNAAFGLLQLEHMDTFLRGRMNADMFYRQKLKDITGISIVIPSGQKISNFSYFPILVESDFPLSRDELFNYLKNQNIFARRYFYPVIPDFQAYLNVGEVCDVKNAREIASKVLCLPMHAELSSDILEYIVSTIREIK.

Residue Lys184 is modified to N6-(pyridoxal phosphate)lysine.

Belongs to the DegT/DnrJ/EryC1 family. Pyridoxal 5'-phosphate serves as cofactor.

The catalysed reaction is dTDP-4-amino-4,6-dideoxy-D-glucose + 2-oxoglutarate = dTDP-4-dehydro-6-deoxy-alpha-D-glucose + L-glutamate. The protein operates within bacterial outer membrane biogenesis; lipopolysaccharide biosynthesis. Catalyzes the conversion of dTDP-4-dehydro-6-deoxy-D-glucose (dTDP-D-Glc4O) to dTDP-4-amino-4,6-dideoxy-D-glucose (dTDP-D-Qui4N). L-glutamine can also be used as amino donor. This chain is dTDP-4-amino-4,6-dideoxy-D-glucose transaminase (vioA), found in Shigella dysenteriae.